The following is a 546-amino-acid chain: MTPGEVRRLYFIIRTFLSYGLDELIPKMRITLPLRLWRYSLFWMPNRHKDKPLGERLRLALQELGPVWIKFGQMLSTRRDLFPPHIADQLALLQDKVAPFDGKLAKQQIEAAMGGLPVEAWFDDFEIKPLASASIAQVHTARLKSNGKEVVIKVIRPDILPVIKADLKLIYRLARWVPRLLPDGRRLRPTEVVREYEKTLIDELNLLRESANAIQLRRNFEDSPMLYIPEVYPDYCSEGMMVMERIYGIPVSDVATLEKNGTNMKLLAERGVQVFFTQVFRDSFFHADMHPGNIFVSYEHPENPKYIGIDCGIVGSLNKEDKRYLAENFIAFFNRDYRKVAELHVDSGWVPPDTNVEEFEFAIRTVCEPIFEKPLAEISFGHVLLNLFNTARRFNMEVQPQLVLLQKTLLYVEGVGRQLYPQLDLWKTAKPFLESWIKDQVGIPALVRAFKEKAPFWVEKMPELPELVYDSLRQGKYLQHSVDKIARELQSNHVRQGQSRYFLGIGATLVLSGTFLLVSRPEWGLMPVWLMAGGLIAWFVGWRKTR.

A Protein kinase domain is found at 124-502 (DFEIKPLASA…HVRQGQSRYF (379 aa)). Residues 130 to 138 (LASASIAQV) and Lys153 contribute to the ATP site. Asp288 serves as the catalytic Proton acceptor. The next 2 helical transmembrane spans lie at 501–521 (YFLG…VSRP) and 522–542 (EWGL…FVGW).

This sequence belongs to the ABC1 family. UbiB subfamily.

The protein localises to the cell inner membrane. It participates in cofactor biosynthesis; ubiquinone biosynthesis [regulation]. Its function is as follows. Is probably a protein kinase regulator of UbiI activity which is involved in aerobic coenzyme Q (ubiquinone) biosynthesis. The polypeptide is Probable protein kinase UbiB (Escherichia coli (strain SMS-3-5 / SECEC)).